We begin with the raw amino-acid sequence, 218 residues long: N-(5'-phosphoribosyl)anthranilate isomerase (218 aa).

This sequence belongs to the TrpF family.

It catalyses the reaction N-(5-phospho-beta-D-ribosyl)anthranilate = 1-(2-carboxyphenylamino)-1-deoxy-D-ribulose 5-phosphate. The protein operates within amino-acid biosynthesis; L-tryptophan biosynthesis; L-tryptophan from chorismate: step 3/5. In Rhodopseudomonas palustris (strain BisB18), this protein is N-(5'-phosphoribosyl)anthranilate isomerase.